A 511-amino-acid chain; its full sequence is Bifunctional purine biosynthesis protein PurH (511 aa).

Residues 1–145 (MKRRALVSVS…KNHQHVTVVV (145 aa)) enclose the MGS-like domain.

It belongs to the PurH family.

It carries out the reaction (6R)-10-formyltetrahydrofolate + 5-amino-1-(5-phospho-beta-D-ribosyl)imidazole-4-carboxamide = 5-formamido-1-(5-phospho-D-ribosyl)imidazole-4-carboxamide + (6S)-5,6,7,8-tetrahydrofolate. It catalyses the reaction IMP + H2O = 5-formamido-1-(5-phospho-D-ribosyl)imidazole-4-carboxamide. Its pathway is purine metabolism; IMP biosynthesis via de novo pathway; 5-formamido-1-(5-phospho-D-ribosyl)imidazole-4-carboxamide from 5-amino-1-(5-phospho-D-ribosyl)imidazole-4-carboxamide (10-formyl THF route): step 1/1. It participates in purine metabolism; IMP biosynthesis via de novo pathway; IMP from 5-formamido-1-(5-phospho-D-ribosyl)imidazole-4-carboxamide: step 1/1. The sequence is that of Bifunctional purine biosynthesis protein PurH from Halalkalibacterium halodurans (strain ATCC BAA-125 / DSM 18197 / FERM 7344 / JCM 9153 / C-125) (Bacillus halodurans).